Reading from the N-terminus, the 89-residue chain is UPF0213 protein LMOf2365_0181 (89 aa).

The 76-residue stretch at 5-80 (SEHFFYVLKC…KKLSRKNKDA (76 aa)) folds into the GIY-YIG domain.

It belongs to the UPF0213 family.

This Listeria monocytogenes serotype 4b (strain F2365) protein is UPF0213 protein LMOf2365_0181.